The following is a 352-amino-acid chain: tRNA pseudouridine synthase D (352 aa).

Residue Asp-81 is the Nucleophile of the active site. The region spanning 157-303 (GIPNYFGVQR…MEHERRILRL (147 aa)) is the TRUD domain.

This sequence belongs to the pseudouridine synthase TruD family.

The enzyme catalyses uridine(13) in tRNA = pseudouridine(13) in tRNA. Its function is as follows. Responsible for synthesis of pseudouridine from uracil-13 in transfer RNAs. The protein is tRNA pseudouridine synthase D of Pseudomonas syringae pv. tomato (strain ATCC BAA-871 / DC3000).